The sequence spans 211 residues: MRTLVVDHPLVAHKLTVLRDKNTPSPVFRQLTEELVTLLAYEATREVRTEPVTIQTPVSTTVGTAFTKPTPLVVPILRAGLGMLEGMTKLVPTAEVGFLGMARDEETLDIITYAERLPDDLTGRQVFVLDPMLATGGTLREAIKFLFKRGASDVTCICLLAAPEGLAKLEEELGEANVHIVLASIDEKLNEKSYIVPGLGDAGDRLYGIAG.

5-phospho-alpha-D-ribose 1-diphosphate is bound by residues Arg-78, Arg-103, and 130 to 138 (DPMLATGGT). Uracil is bound by residues Ile-195 and 200–202 (GDA). Asp-201 is a binding site for 5-phospho-alpha-D-ribose 1-diphosphate.

Belongs to the UPRTase family. Mg(2+) serves as cofactor.

It catalyses the reaction UMP + diphosphate = 5-phospho-alpha-D-ribose 1-diphosphate + uracil. It functions in the pathway pyrimidine metabolism; UMP biosynthesis via salvage pathway; UMP from uracil: step 1/1. With respect to regulation, allosterically activated by GTP. Its function is as follows. Catalyzes the conversion of uracil and 5-phospho-alpha-D-ribose 1-diphosphate (PRPP) to UMP and diphosphate. The polypeptide is Uracil phosphoribosyltransferase (Pseudarthrobacter chlorophenolicus (strain ATCC 700700 / DSM 12829 / CIP 107037 / JCM 12360 / KCTC 9906 / NCIMB 13794 / A6) (Arthrobacter chlorophenolicus)).